The following is a 482-amino-acid chain: MAKPTVVLLPVWGAGHFMPMIEAGKRLLRGSGGALSVTVLLMPAPTPDAAVDIAAQVKREEASGADDISFRHLPAVDMPTGHTGVEEWISRILRSHAPNVRAAIAGLDCPVAALVTDIFCTPALEVSRELGVPGYVYFPCSASMLALLLRSPGLDEEVAVEFEEMDGAIRIPGLPPVPPSALPSTMLDRKKSTYDWFVATGRGYMNATGFIVNTAAELEQSVIDAIADGRCTRGVPAPTVYPIGPVLYFPPPPEEQPHECVRWLDAQPPASVLFLCFGSKGLLPPPKVREIAAALGRSGGHRFLWVLRGPPKDSRHGQRVPTDAMLDELLPEGFLERTKGRGLVWPTRAPQKEILAHAAVGGFVTHCGWNSILESLWFGVPVLPWPLDAEQHFNAFTLVAHLGVAVPLGMDRRRDNFVEAAELERAVRSLMDDASEEGRKARAKAAETRVVCRKAVEEGGSSSTAFRRLTDDIVRRGAVQIR.

H16 (proton acceptor) is an active-site residue. D117 (charge relay) is an active-site residue. Residues S279, W345, A349, H366, N370, S371, and E374 each contribute to the UDP site.

Belongs to the UDP-glycosyltransferase family.

Its subcellular location is the endoplasmic reticulum. It localises to the nucleus. It carries out the reaction malvidin + UDP-alpha-D-galactose = malvidin 3-O-beta-D-galactoside + UDP + H(+). It participates in pigment biosynthesis; anthocyanin biosynthesis. Functionally, UDP-glycosyltransferase which uses UDP-galactose and malvidin as substrates to catalyze the biosynthesis of malvidin 3-O-galactoside, an anthocyanin conferring purple pigmentation. This is Malvidin galactosylase UGT88C3 from Oryza sativa subsp. indica (Rice).